The primary structure comprises 369 residues: Phenylalanine--tRNA ligase alpha subunit (369 aa).

Glu270 provides a ligand contact to Mg(2+).

This sequence belongs to the class-II aminoacyl-tRNA synthetase family. Phe-tRNA synthetase alpha subunit type 1 subfamily. Tetramer of two alpha and two beta subunits. Mg(2+) serves as cofactor.

The protein resides in the cytoplasm. It carries out the reaction tRNA(Phe) + L-phenylalanine + ATP = L-phenylalanyl-tRNA(Phe) + AMP + diphosphate + H(+). The protein is Phenylalanine--tRNA ligase alpha subunit of Phenylobacterium zucineum (strain HLK1).